We begin with the raw amino-acid sequence, 120 residues long: uncharacterized protein (120 aa).

3 helical membrane-spanning segments follow: residues 20–39 (FFWP…CYLL), 52–71 (GSSL…LFSI), and 86–108 (ILVV…SIIG).

The protein localises to the cell membrane. This is an uncharacterized protein from Pasteurella multocida (strain Pm70).